Here is a 506-residue protein sequence, read N- to C-terminus: Maturase K (506 aa).

It belongs to the intron maturase 2 family. MatK subfamily.

Its subcellular location is the plastid. The protein resides in the chloroplast. Usually encoded in the trnK tRNA gene intron. Probably assists in splicing its own and other chloroplast group II introns. In Lathyrus aphaca (Yellow vetchling), this protein is Maturase K.